The chain runs to 57 residues: MSEFTVTGTFESRDGNQPFEKTVEAPNENVARDRAFAAFGSEHGLKRTQVEISEVAQ.

The span at 1-10 (MSEFTVTGTF) shows a compositional bias: polar residues. The disordered stretch occupies residues 1–21 (MSEFTVTGTFESRDGNQPFEK).

This sequence belongs to the eukaryotic ribosomal protein eL20 family. As to quaternary structure, part of the 50S ribosomal subunit. Binds 23S rRNA.

The protein is Large ribosomal subunit protein eL20 of Halomicrobium mukohataei (strain ATCC 700874 / DSM 12286 / JCM 9738 / NCIMB 13541) (Haloarcula mukohataei).